A 197-amino-acid polypeptide reads, in one-letter code: Peptidyl-tRNA hydrolase (197 aa).

Tyr18 contributes to the tRNA binding site. Catalysis depends on His23, which acts as the Proton acceptor. Residues Phe69, Asn71, and Asn117 each coordinate tRNA.

Belongs to the PTH family. As to quaternary structure, monomer.

Its subcellular location is the cytoplasm. The catalysed reaction is an N-acyl-L-alpha-aminoacyl-tRNA + H2O = an N-acyl-L-amino acid + a tRNA + H(+). Functionally, hydrolyzes ribosome-free peptidyl-tRNAs (with 1 or more amino acids incorporated), which drop off the ribosome during protein synthesis, or as a result of ribosome stalling. Its function is as follows. Catalyzes the release of premature peptidyl moieties from peptidyl-tRNA molecules trapped in stalled 50S ribosomal subunits, and thus maintains levels of free tRNAs and 50S ribosomes. This is Peptidyl-tRNA hydrolase from Psychromonas ingrahamii (strain DSM 17664 / CCUG 51855 / 37).